The primary structure comprises 165 residues: UPF0303 protein Bphyt_1734 (165 aa).

The protein belongs to the UPF0303 family.

In Paraburkholderia phytofirmans (strain DSM 17436 / LMG 22146 / PsJN) (Burkholderia phytofirmans), this protein is UPF0303 protein Bphyt_1734.